Here is a 487-residue protein sequence, read N- to C-terminus: 3-octaprenyl-4-hydroxybenzoate carboxy-lyase (487 aa).

Asn172 provides a ligand contact to Mn(2+). Prenylated FMN-binding positions include 175–177, 189–191, and 194–195; these read IYR, RWL, and RG. A Mn(2+)-binding site is contributed by Glu238. Catalysis depends on Asp287, which acts as the Proton donor.

This sequence belongs to the UbiD family. In terms of assembly, homohexamer. It depends on prenylated FMN as a cofactor. Mn(2+) is required as a cofactor.

It is found in the cell membrane. It carries out the reaction a 4-hydroxy-3-(all-trans-polyprenyl)benzoate + H(+) = a 2-(all-trans-polyprenyl)phenol + CO2. It participates in cofactor biosynthesis; ubiquinone biosynthesis. Functionally, catalyzes the decarboxylation of 3-octaprenyl-4-hydroxy benzoate to 2-octaprenylphenol, an intermediate step in ubiquinone biosynthesis. This chain is 3-octaprenyl-4-hydroxybenzoate carboxy-lyase, found in Blochmanniella pennsylvanica (strain BPEN).